Consider the following 51-residue polypeptide: Large ribosomal subunit protein eL39 (51 aa).

Belongs to the eukaryotic ribosomal protein eL39 family. In terms of assembly, interacts with YIH1.

This chain is Large ribosomal subunit protein eL39 (RPL39), found in Kluyveromyces marxianus (Yeast).